The following is a 441-amino-acid chain: tRNA-2-methylthio-N(6)-dimethylallyladenosine synthase (441 aa).

An MTTase N-terminal domain is found at 5–121 (KKLFIKTYGC…LPQMEARLRE (117 aa)). Cys-14, Cys-50, Cys-84, Cys-159, Cys-163, and Cys-166 together coordinate [4Fe-4S] cluster. The 236-residue stretch at 145–380 (ARRAPSAFLT…TRQQQDIQQS (236 aa)) folds into the Radical SAM core domain. The TRAM domain occupies 379 to 441 (QSMVGRDVSV…RNSLAAVTLA (63 aa)).

It belongs to the methylthiotransferase family. MiaB subfamily. Monomer. [4Fe-4S] cluster is required as a cofactor.

The protein localises to the cytoplasm. It carries out the reaction N(6)-dimethylallyladenosine(37) in tRNA + (sulfur carrier)-SH + AH2 + 2 S-adenosyl-L-methionine = 2-methylsulfanyl-N(6)-dimethylallyladenosine(37) in tRNA + (sulfur carrier)-H + 5'-deoxyadenosine + L-methionine + A + S-adenosyl-L-homocysteine + 2 H(+). Functionally, catalyzes the methylthiolation of N6-(dimethylallyl)adenosine (i(6)A), leading to the formation of 2-methylthio-N6-(dimethylallyl)adenosine (ms(2)i(6)A) at position 37 in tRNAs that read codons beginning with uridine. The protein is tRNA-2-methylthio-N(6)-dimethylallyladenosine synthase of Roseobacter denitrificans (strain ATCC 33942 / OCh 114) (Erythrobacter sp. (strain OCh 114)).